Consider the following 217-residue polypeptide: NADPH-dependent 3-demethoxyubiquinone 3-hydroxylase, mitochondrial (217 aa).

2 consecutive repeat copies span residues 48–129 (AVDQ…TALL) and 130–217 (GKEG…SERF). The interval 48-217 (AVDQIIRVDH…SAAIYLSERF (170 aa)) is 2 X approximate tandem repeats. Glutamate 60, glutamate 90, histidine 93, glutamate 142, glutamate 178, and histidine 181 together coordinate Fe cation. NADH is bound by residues tyrosine 212 and arginine 216.

This sequence belongs to the COQ7 family. Component of a multi-subunit COQ enzyme complex. Interacts with COQ8B and COQ6. Interacts with COQ9. Fe cation serves as cofactor.

Its subcellular location is the mitochondrion inner membrane. It carries out the reaction a 5-methoxy-2-methyl-3-(all-trans-polyprenyl)benzoquinone + NADH + O2 = a 3-demethylubiquinone + NAD(+) + H2O. Its pathway is cofactor biosynthesis; ubiquinone biosynthesis. Catalyzes the hydroxylation of the 5-methoxy-2-methyl-3-(all-trans-polyprenyl)benzoquinone at the C6 position and participates in the biosynthesis of ubiquinone. Catalyzes the reaction through a substrate-mediated reduction pathway, whereby NADH shuttles electrons to 5-methoxy-2-methyl-3-(all-trans-decaprenyl)benzoquinone, which then transfers the electrons to the two Fe(3+) centers. The binding of 5-methoxy-2-methyl-3-(all-trans-polyprenyl)benzoquinone (DMQn) mediates reduction of the diiron center by nicotinamide adenine dinucleotide (NADH) and initiates oxygen activation for subsequent DMQ hydroxylation. The physiological substrates are 5-methoxy-2-methyl-3-(all-trans-nonaprenyl)benzoquinone (DMQ(9)) and 5-methoxy-2-methyl-3-(all-trans-decaprenyl)benzoquinone (DMQ(10)), however in vitro the enzyme does not have any specificity concerning the length of the polyprenyl tail, and accepts tails of various lengths with similar efficiency. Also has a structural role in the COQ enzyme complex, stabilizing other COQ polypeptides. Involved in lifespan determination in a ubiquinone-independent manner. Plays a role in modulating mitochondrial stress responses, acting in the nucleus, perhaps via regulating gene expression, independent of its characterized mitochondrial function in ubiquinone biosynthesis. The chain is NADPH-dependent 3-demethoxyubiquinone 3-hydroxylase, mitochondrial from Rattus norvegicus (Rat).